The following is a 599-amino-acid chain: Dictomallein-2 (599 aa).

A signal peptide spans 1 to 20; it reads MKLILIYLILVFNLFNFINC. The region spanning 145-407 is the Peptidase M66 domain; sequence PDVGQDYTLK…QNYFKNSIYY (263 aa). Histidine 298 contributes to the Zn(2+) binding site. The active site involves glutamate 299. Zn(2+) contacts are provided by histidine 302 and histidine 308.

It belongs to the dictomallein family. The cofactor is Zn(2+).

It localises to the secreted. This Dictyostelium discoideum (Social amoeba) protein is Dictomallein-2 (dtmlB).